The following is a 182-amino-acid chain: Ribosome maturation factor RimM (182 aa).

The region spanning 103 to 182 (EDDYYWKDLM…RVEVDWDPGF (80 aa)) is the PRC barrel domain.

It belongs to the RimM family. Binds ribosomal protein uS19.

The protein localises to the cytoplasm. An accessory protein needed during the final step in the assembly of 30S ribosomal subunit, possibly for assembly of the head region. Essential for efficient processing of 16S rRNA. May be needed both before and after RbfA during the maturation of 16S rRNA. It has affinity for free ribosomal 30S subunits but not for 70S ribosomes. The chain is Ribosome maturation factor RimM from Yersinia pestis (strain Pestoides F).